Consider the following 138-residue polypeptide: Mitochondrial import inner membrane translocase subunit tim-16 (138 aa).

Residues 32–43 (TQQAAARHAAAT) show a composition bias toward low complexity. Disordered stretches follow at residues 32–58 (TQQA…NANA) and 118–138 (LSRL…NSKE). Polar residues predominate over residues 44-56 (GQSPSETKENANA). The tract at residues 66–119 (ESLQILNVKTPLNREDVEKHYEHLFAINDKAKGGTFYLQSKVYRAKERIDEELS) is J-like.

Belongs to the TIM16/PAM16 family. As to quaternary structure, probable component of the PAM complex at least composed of a mitochondrial HSP70 protein, GrpE, tim-44, tim-16 and tim-14. Associates with the TIM23 complex.

It localises to the mitochondrion inner membrane. Its function is as follows. Regulates ATP-dependent protein translocation into the mitochondrial matrix. The sequence is that of Mitochondrial import inner membrane translocase subunit tim-16 from Caenorhabditis briggsae.